The sequence spans 869 residues: Serendipity locus protein H-1 (869 aa).

Positions 1–17 are enriched in basic and acidic residues; sequence MEGGKGEGKRMKEEAPS. Disordered regions lie at residues 1-32 and 134-165; these read MEGG…AGTP and FSVT…TPVK. Polar residues predominate over residues 146 to 164; it reads AFTNSPFKKTSSSGTSTPV. C2H2-type zinc fingers lie at residues 269–293, 299–321, 331–352, 358–380, 386–408, 414–436, 442–464, and 470–493; these read HKCL…AAAH, YRCS…LKTH, KKCP…RKIH, YQCD…ARIH, YECP…QKYH, YRCE…NLVH, FACT…SNIH, and FKCN…RRRH. Disordered regions lie at residues 554 to 573 and 617 to 652; these read TSTA…QPQQ and PKQT…SSLE. The segment covering 630 to 648 has biased composition (low complexity); the sequence is APKQLQQKPQLLQQGQPQQ.

As to expression, distribution varies between nurse cells and the oocyte during oogenesis. Weakly expressed in follicle and border cells.

The protein localises to the nucleus. In terms of biological role, may belong to a complex set of multifingered proteins which play an important role in gene activation or regulation at early embryonic stages through a maximal accumulation of their transcripts (or protein product) in the mature oocyte. The sequence is that of Serendipity locus protein H-1 (wdn) from Drosophila melanogaster (Fruit fly).